A 407-amino-acid chain; its full sequence is Cathepsin D (407 aa).

Positions 1–20 are cleaved as a signal peptide; sequence MQTPGVLLLILGLLDASSSA. A propeptide spans 21 to 64 (activation peptide); sequence LIRIPLRKFTSIRRTMTEVGGSVEDLILKGPITKYSMQSSPRTK. One can recognise a Peptidase A1 domain in the interval 79–402; it reads YYGEIGIGTP…DREYNRVGFA (324 aa). 2 disulfide bridges follow: Cys-91-Cys-160 and Cys-110-Cys-117. Residue Asp-97 is part of the active site. Asn-134 and Asn-258 each carry an N-linked (GlcNAc...) asparagine glycan. Residues Cys-281 and Cys-285 are joined by a disulfide bond. Asp-290 is an active-site residue. Cys-324 and Cys-361 are disulfide-bonded.

This sequence belongs to the peptidase A1 family. Occurs as a mixture of both a single chain form and two types of two chain (light and heavy) forms. Interacts with ADAM30; this leads to activation of CTSD. Post-translationally, N- and O-glycosylated. In terms of processing, undergoes proteolytic cleavage and activation by ADAM30.

Its subcellular location is the lysosome. The protein localises to the melanosome. It is found in the secreted. The protein resides in the extracellular space. It carries out the reaction Specificity similar to, but narrower than, that of pepsin A. Does not cleave the 4-Gln-|-His-5 bond in B chain of insulin.. In terms of biological role, acid protease active in intracellular protein breakdown. Plays a role in APP processing following cleavage and activation by ADAM30 which leads to APP degradation. This chain is Cathepsin D (Ctsd), found in Rattus norvegicus (Rat).